The following is a 593-amino-acid chain: Probable serine/threonine-protein kinase fhkA (593 aa).

Positions 1-24 (MSQTNYIPSTPNKSTPPSELSSTP) are disordered. Residues 54 to 111 (ITIGRSKTCNIVVPELIVSGKHCIITRADAIENGNTNYGLLMIQDQSTNGTFINGKLI) form the FHA domain. A Protein kinase domain is found at 180 to 472 (YDFIKELGSG…VEQALNHPWI (293 aa)). ATP is bound by residues 186–194 (LGSGNFSVV) and lysine 209. The Proton acceptor role is filled by aspartate 307.

It belongs to the protein kinase superfamily. CAMK Ser/Thr protein kinase family. CHK2 subfamily.

It catalyses the reaction L-seryl-[protein] + ATP = O-phospho-L-seryl-[protein] + ADP + H(+). The enzyme catalyses L-threonyl-[protein] + ATP = O-phospho-L-threonyl-[protein] + ADP + H(+). This is Probable serine/threonine-protein kinase fhkA (fhkA) from Dictyostelium discoideum (Social amoeba).